The chain runs to 292 residues: UPF0282 protein MJ1629 (292 aa).

It belongs to the UPF0282 family.

This chain is UPF0282 protein MJ1629, found in Methanocaldococcus jannaschii (strain ATCC 43067 / DSM 2661 / JAL-1 / JCM 10045 / NBRC 100440) (Methanococcus jannaschii).